We begin with the raw amino-acid sequence, 735 residues long: MSEINDFTNSIIINESDTKYEVYSEVNSSNRWIAKEDCPSPLEDVWLLKLAGHKRKLEEPLSCMRNEEPASKQREIEKFLRTDLDHSENDFLTQEVDEFPSTQQLFPIPLQNDTAFDSSEESITKSSKSSFSVLDIGLPMSALQRKMMHRLVQYFAFCIDHFCTGPSDSRIQEKIRLFIQSAHNIAKHPSLYDTEVRNPSAAESTNSHVSLDASNFSSYAENSSKFLFLQELFKNLSPSYSKTFFLFISNQFLANTLTQWLKSQNIDAELWAEEDAKTSQHPAIWICVSKKAPSASHFLQSCPDLSATIFYDIEAYMSVTSSLPSIQSLVLRLIHLGSIEHAIKCFQSSYNASFLVNIVGVVATLSSSSEENSEASNLSTLFEKSGNFEEILGSESHSSITEKTRDIAKNVATWLKNGENFSSWPLPPLMDLASLSVAEPRDSQPSVSQVNDTFVKSSDSTFPSSQSMQSPSKLHSLTSNATDLLSSSSLKKNFFSQQEADEVELSNNYDLQGAAVQYLQRRLRMVEDELHEAINSKNVQQSRSEELEQQISKLTDNLQEYRNTVRELKLDLEKSKKKNEDLSKLEVEKVEEIANLKKELTHLAKQQEFGFKYVQEFSNEDLQGKLIEANEKNYKLTQLLKTQKEDADFITNQYQNASTFAAEQSKEVAKLQAECKRLQAINSKVMEEVKVYNDSRVEALLAKVSSLEETLKILEQKSLPKFTPHNQSPRIIDSN.

Residues 514–719 (AAVQYLQRRL…TLKILEQKSL (206 aa)) are a coiled coil.

In terms of assembly, interacts (during meiosis) with pcp1. Interacts with clr3, pot1, taz1 and tpz1.

It localises to the nucleus. It is found in the nucleoplasm. The protein resides in the chromosome. The protein localises to the telomere. Its function is as follows. Component of the meiotic bouquet that facilitates meiotic nuclear reorganization of the telomeres to the centrosome. Links telomeres to the meiotic centrosome component pcp1. Essential for the formation of normal telomere clusters during meiotic prophase. Required for telomere length regulation and chromosome segregation. Required for proper positioning of nucleosomes at heterochromatic loci and for transcriptional gene silencing (TGS) function of the Snf2/Hdac-containing repressor complex (SHREC). This Schizosaccharomyces pombe (strain 972 / ATCC 24843) (Fission yeast) protein is Coiled-coil quantitatively-enriched protein 1 (ccq1).